The following is a 611-amino-acid chain: Elongation factor 4 (611 aa).

The tr-type G domain occupies 11 to 193 (KHIRNFSIVA…KIVKDVPAPT (183 aa)). GTP contacts are provided by residues 23–28 (DHGKST) and 140–143 (NKID).

This sequence belongs to the TRAFAC class translation factor GTPase superfamily. Classic translation factor GTPase family. LepA subfamily.

It localises to the cell membrane. The enzyme catalyses GTP + H2O = GDP + phosphate + H(+). Functionally, required for accurate and efficient protein synthesis under certain stress conditions. May act as a fidelity factor of the translation reaction, by catalyzing a one-codon backward translocation of tRNAs on improperly translocated ribosomes. Back-translocation proceeds from a post-translocation (POST) complex to a pre-translocation (PRE) complex, thus giving elongation factor G a second chance to translocate the tRNAs correctly. Binds to ribosomes in a GTP-dependent manner. In Limosilactobacillus reuteri (strain DSM 20016) (Lactobacillus reuteri), this protein is Elongation factor 4.